The following is a 602-amino-acid chain: MSTPAMLQLGLFLVVLIALAWPLGAYMTRVMQGENIGPARWCAPLERGFYRLAGIKQEEEMGWRGYAVALILFNVLGVAAVYALQRLQGMLPFNPQAMAAVSPDSSFNTAISFVTNTNWQGYGGETTMSYLTQMLGLTVQNFVSAATGAAVVIALIRGFARHSSAKIGNFWVDVTRMTLYVLLPLAVVFALVFTQQGAIQNLSAYQDVHTVETVKYQQPKQDAKGNPVLGKDGKPVMEDKTSQTQTLPMGPVASQEAIKMLGTNGGGFFNANSAHPFENPTPLANFLQDIAIFLIPAALCFLFGRMVGDRRQGWAILAAMTIMFATAVVVETRAEQAGVPQYSSLGIDQRASQLQSGGNMEGKEARFGIIDTSLFVAVTTSASCGAVNAMHDSLTPIGGLVPMFLMQLGEVVFGGVGSGLYGMLIFAILAVFIAGLMVGRTPEYLGKKIETYEMKMTAITILVTPTLVLALTAIAVSLAAGKAGIANPAAHGFSEILYAFTSAANNNGSAFAGLSANTPFYNIMTGLAMFFGRFFMIVPILAIAGSLAAKKRLAVTGGTLPTHGPLFVTLLIGTVLLVGALNYVPALALGPVVEHLQMLAAR.

The next 4 helical transmembrane spans lie at Ala5–Ala25, Gly65–Gln85, Gly136–Ile156, and Leu179–Ile199. The interval Gln221–Pro248 is disordered. Positions Lys231–Thr241 are enriched in basic and acidic residues. 6 helical membrane-spanning segments follow: residues Leu283–Phe303, Gln312–Thr332, Gly419–Gly439, Ala458–Leu478, Ile523–Ile543, and Leu566–Ala586.

Belongs to the KdpA family. As to quaternary structure, the system is composed of three essential subunits: KdpA, KdpB and KdpC.

Its subcellular location is the cell inner membrane. Its function is as follows. Part of the high-affinity ATP-driven potassium transport (or Kdp) system, which catalyzes the hydrolysis of ATP coupled with the electrogenic transport of potassium into the cytoplasm. This subunit binds the periplasmic potassium ions and delivers the ions to the membrane domain of KdpB through an intramembrane tunnel. The chain is Potassium-transporting ATPase potassium-binding subunit from Chromobacterium violaceum (strain ATCC 12472 / DSM 30191 / JCM 1249 / CCUG 213 / NBRC 12614 / NCIMB 9131 / NCTC 9757 / MK).